Consider the following 427-residue polypeptide: Phosphomethylpyrimidine synthase (427 aa).

Substrate is bound by residues asparagine 66, methionine 95, tyrosine 124, histidine 163, 185–187 (SRG), 226–229 (DGLR), and glutamate 265. Histidine 269 lines the Zn(2+) pocket. Residue tyrosine 292 participates in substrate binding. Histidine 333 lines the Zn(2+) pocket. Cysteine 409, cysteine 412, and cysteine 416 together coordinate [4Fe-4S] cluster.

It belongs to the ThiC family. In terms of assembly, homodimer. [4Fe-4S] cluster is required as a cofactor.

It catalyses the reaction 5-amino-1-(5-phospho-beta-D-ribosyl)imidazole + S-adenosyl-L-methionine = 4-amino-2-methyl-5-(phosphooxymethyl)pyrimidine + CO + 5'-deoxyadenosine + formate + L-methionine + 3 H(+). It participates in cofactor biosynthesis; thiamine diphosphate biosynthesis. In terms of biological role, catalyzes the synthesis of the hydroxymethylpyrimidine phosphate (HMP-P) moiety of thiamine from aminoimidazole ribotide (AIR) in a radical S-adenosyl-L-methionine (SAM)-dependent reaction. The protein is Phosphomethylpyrimidine synthase of Syntrophus aciditrophicus (strain SB).